Here is a 78-residue protein sequence, read N- to C-terminus: Small outer capsid protein (78 aa).

The protein belongs to the Tevenvirinae Soc family. As to quaternary structure, homotrimer. Interacts with the major capsid protein; three soc molecules associate with each interface between the major capsid protein facets.

It is found in the virion. In terms of biological role, capsid decoration protein which helps to stabilize the capsid against extremes of pH and temperature. Once maturation and expansion of the capsid has occured, trimers of soc attach the interfaces between the hexamer of the major capsid protein. Acts as a 'glue' between neighboring hexameric capsomers. Dispensable for the head morphogenesis and phage infection. This is Small outer capsid protein from Escherichia phage RB69 (Bacteriophage RB69).